Here is a 74-residue protein sequence, read N- to C-terminus: UPF0235 protein tsr1994 (74 aa).

The protein belongs to the UPF0235 family.

The protein is UPF0235 protein tsr1994 of Thermosynechococcus vestitus (strain NIES-2133 / IAM M-273 / BP-1).